The following is a 293-amino-acid chain: Light-independent protochlorophyllide reductase iron-sulfur ATP-binding protein (293 aa).

ATP contacts are provided by residues 10-15 (GIGKST) and lysine 39. Serine 14 provides a ligand contact to Mg(2+). Residues cysteine 95 and cysteine 129 each contribute to the [4Fe-4S] cluster site. 180–181 (NR) lines the ATP pocket.

Belongs to the NifH/BchL/ChlL family. Homodimer. Protochlorophyllide reductase is composed of three subunits; ChlL, ChlN and ChlB. It depends on [4Fe-4S] cluster as a cofactor.

It localises to the plastid. The protein resides in the chloroplast. The enzyme catalyses chlorophyllide a + oxidized 2[4Fe-4S]-[ferredoxin] + 2 ADP + 2 phosphate = protochlorophyllide a + reduced 2[4Fe-4S]-[ferredoxin] + 2 ATP + 2 H2O. It participates in porphyrin-containing compound metabolism; chlorophyll biosynthesis (light-independent). Functionally, component of the dark-operative protochlorophyllide reductase (DPOR) that uses Mg-ATP and reduced ferredoxin to reduce ring D of protochlorophyllide (Pchlide) to form chlorophyllide a (Chlide). This reaction is light-independent. The L component serves as a unique electron donor to the NB-component of the complex, and binds Mg-ATP. This chain is Light-independent protochlorophyllide reductase iron-sulfur ATP-binding protein, found in Adiantum capillus-veneris (Maidenhair fern).